The sequence spans 206 residues: HTH-type transcriptional regulator Hpr (206 aa).

An HTH marR-type domain is found at 13–157 (ALLFSQRMAQ…MMCIIRNIYG (145 aa)). Positions 63–86 (ISEIAKFGVMHVSTAFNFSKKLEE) form a DNA-binding region, H-T-H motif. Residues 186–206 (SEELEDSADAAEKAAKANQIV) form a disordered region.

As to quaternary structure, homodimer.

Negative regulator of protease production and sporulation. The protein is HTH-type transcriptional regulator Hpr of Bacillus pumilus (strain SAFR-032).